We begin with the raw amino-acid sequence, 526 residues long: Non-reducing end alpha-L-arabinofuranosidase BoGH43A (526 aa).

Residues 1 to 20 (MRNALFLIFISLCSVCKSSA) form the signal peptide. D34 serves as the catalytic Proton acceptor. E189 (proton donor) is an active-site residue.

It belongs to the glycosyl hydrolase 43 family.

It localises to the periplasm. The catalysed reaction is Hydrolysis of terminal non-reducing alpha-L-arabinofuranoside residues in alpha-L-arabinosides.. Its pathway is glucan metabolism; xyloglucan degradation. Functionally, alpha-L-arabinofuranosidase involved in xyloglucan degradation by mediating the cleavage of terminal non-reducing alpha-L-arabinofuranoside residues in xyloglucan branches, converting the 'S' units to 'X' units. This chain is Non-reducing end alpha-L-arabinofuranosidase BoGH43A, found in Bacteroides ovatus (strain ATCC 8483 / DSM 1896 / JCM 5824 / BCRC 10623 / CCUG 4943 / NCTC 11153).